The chain runs to 456 residues: Two pore potassium channel c (456 aa).

Residues 1–19 (MDTEPLLSPLSPSPHLLHP) show a composition bias toward low complexity. A disordered region spans residues 1–112 (MDTEPLLSPL…PPSLFDFIGG (112 aa)). Residues 1–152 (MDTEPLLSPL…RNPPPPPRRP (152 aa)) lie on the Cytoplasmic side of the membrane. Residues 52-67 (HPPPPPPPPPPPPPPP) show a composition bias toward pro residues. A helical transmembrane segment spans residues 153–173 (AIVLHAFLFLLAYLAMGVTFY). An intramembrane region (pore-forming) is located at residues 192–211 (DALYFCIVTLCTIGYGDITP). The helical transmembrane segment at 223-243 (FVLIGFGFVDILLSGMVSYVL) threads the bilayer. At 244 to 279 (DLQEHLLITALKNPRSVRKHRHNYIFDLKKGRMRVR) the chain is on the cytoplasmic side. Residues 280–300 (MKVALALTVVAICVGVGAAVL) form a helical membrane-spanning segment. Residues 310–329 (DAVYLAVMSVTTVGYGDHAF) constitute an intramembrane region (pore-forming). Residues 336 to 356 (LFASAWLLVSTLAVARAFLYL) traverse the membrane as a helical segment. The Cytoplasmic segment spans residues 357 to 456 (AEMRIDKRHR…LNEKKKGKKS (100 aa)). EF-hand domains lie at 373-408 (LSRD…EMGK) and 412-447 (KDIM…VTDL). Positions 386, 388, 390, 392, 397, 425, 431, and 436 each coordinate Ca(2+).

It belongs to the two pore domain potassium channel (TC 1.A.1.7) family. As to quaternary structure, homodimer.

The protein resides in the membrane. Functionally, inward-rectifying potassium channel. This Oryza sativa subsp. japonica (Rice) protein is Two pore potassium channel c (TPKC).